Consider the following 162-residue polypeptide: Protein hcp1 (162 aa).

It belongs to the hcp1 family. Hexamer. Three hcp1 monomers form two closely related hexameric rings with a 40 Angstrom internal diameter.

The protein resides in the secreted. Required for assembly of the protein secretion apparatus HSI-I. Actively secreted during chronic infection of cystic fibrosis patients. In Pseudomonas aeruginosa (strain ATCC 15692 / DSM 22644 / CIP 104116 / JCM 14847 / LMG 12228 / 1C / PRS 101 / PAO1), this protein is Protein hcp1 (hcp1).